The following is a 281-amino-acid chain: MITSAHIDDIRTQVRAWRAKGETVAFVPTMGNLHQGHITLVKEAASKCDHVVASIFVNPMQFGQNEDLDAYPRTLAADSEALTAAGAELLFTPTPAVMYPKGLEQQTYVEVPGISNVLCGASRPGHFRGVATIVCKLFNIVQPDVALFGNKDYQQLLVIKTMVEDLSLPIEIIGVDTIREDSGLAMSSRNGYLTAAEKAAAPALKQAIDAMAAGIKQGESFEQMTEQAKACLVAAGFTPDYLEIRHAHTLEQAQNQDHALVILAAAYIGKARLIDNLRFDR.

30 to 37 (MGNLHQGH) contacts ATP. H37 serves as the catalytic Proton donor. Residue Q61 participates in (R)-pantoate binding. Q61 provides a ligand contact to beta-alanine. ATP is bound at residue 149–152 (GNKD). Residue Q155 coordinates (R)-pantoate. Residues I178 and 186 to 189 (MSSR) each bind ATP.

It belongs to the pantothenate synthetase family. Homodimer.

It is found in the cytoplasm. The enzyme catalyses (R)-pantoate + beta-alanine + ATP = (R)-pantothenate + AMP + diphosphate + H(+). It participates in cofactor biosynthesis; (R)-pantothenate biosynthesis; (R)-pantothenate from (R)-pantoate and beta-alanine: step 1/1. Functionally, catalyzes the condensation of pantoate with beta-alanine in an ATP-dependent reaction via a pantoyl-adenylate intermediate. The sequence is that of Pantothenate synthetase from Shewanella baltica (strain OS195).